Here is a 379-residue protein sequence, read N- to C-terminus: MTASAVLDLVKDLIARPSVTPDDVDCQMLLAQRLERIGFQCETIARGGVTNLWARRGAGAPLTVFAGHTDVVPPGPRDKWDSDPFVPTERDGFLYGRGAADMKSSIAAFVVAAEEFVAAHPEHPGSIALLITSDEEGPAVDGTVIVCDELRQRGEQLDYCIVGEPTSTEALGDVCKNGRRGSLSGRLLVKGVQGHVAYPHLARNPVHQLAPALTELVAIEWDQGNEYFPPTTFQVSNLHAGTGATNVVPGEAVALFNFRFSTASTPGQLKARVHEVLDRHGLEYQLDWELGGEPFLTPRGSLTDALVSAIQAETGLQAELSTTGGTSDGRFIARICPQVIEFGPCNATIHKVNERIELSSLAPLKNIYRRTLENLLLAD.

Zn(2+) is bound at residue histidine 68. Residue aspartate 70 is part of the active site. Aspartate 101 contributes to the Zn(2+) binding site. Catalysis depends on glutamate 135, which acts as the Proton acceptor. Zn(2+)-binding residues include glutamate 136, glutamate 164, and histidine 350.

It belongs to the peptidase M20A family. DapE subfamily. In terms of assembly, homodimer. Zn(2+) serves as cofactor. The cofactor is Co(2+).

The enzyme catalyses N-succinyl-(2S,6S)-2,6-diaminopimelate + H2O = (2S,6S)-2,6-diaminopimelate + succinate. It participates in amino-acid biosynthesis; L-lysine biosynthesis via DAP pathway; LL-2,6-diaminopimelate from (S)-tetrahydrodipicolinate (succinylase route): step 3/3. In terms of biological role, catalyzes the hydrolysis of N-succinyl-L,L-diaminopimelic acid (SDAP), forming succinate and LL-2,6-diaminopimelate (DAP), an intermediate involved in the bacterial biosynthesis of lysine and meso-diaminopimelic acid, an essential component of bacterial cell walls. The sequence is that of Succinyl-diaminopimelate desuccinylase from Bordetella bronchiseptica (strain ATCC BAA-588 / NCTC 13252 / RB50) (Alcaligenes bronchisepticus).